The primary structure comprises 557 residues: Urocanate hydratase (557 aa).

The segment at 1-20 (MSNPRHNEREVRSPRGDELN) is disordered. NAD(+)-binding positions include 52-53 (GG), Gln-130, 176-178 (GMG), Glu-196, Arg-201, 242-243 (NA), 263-267 (QTSAH), 273-274 (YL), and Tyr-322. Residue Cys-410 is part of the active site. Gly-492 is a binding site for NAD(+).

It belongs to the urocanase family. NAD(+) is required as a cofactor.

The protein resides in the cytoplasm. The enzyme catalyses 4-imidazolone-5-propanoate = trans-urocanate + H2O. It functions in the pathway amino-acid degradation; L-histidine degradation into L-glutamate; N-formimidoyl-L-glutamate from L-histidine: step 2/3. In terms of biological role, catalyzes the conversion of urocanate to 4-imidazolone-5-propionate. This is Urocanate hydratase from Brucella ovis (strain ATCC 25840 / 63/290 / NCTC 10512).